The sequence spans 669 residues: UvrABC system protein B (669 aa).

The region spanning 26-414 (EGLEDGLAHQ…SGDVVEQVVR (389 aa)) is the Helicase ATP-binding domain. An ATP-binding site is contributed by 39 to 46 (GVTGSGKT). Residues 92 to 115 (YYDYYQPEAYVPSSDTFIEKDASV) carry the Beta-hairpin motif. Residues 431–597 (QVDDLLSEIR…GLNKKINDIL (167 aa)) enclose the Helicase C-terminal domain. The UVR domain maps to 629–664 (ESKIRELEAKMYQHAQDLEFEQAASVRDQVQALREQ).

This sequence belongs to the UvrB family. In terms of assembly, forms a heterotetramer with UvrA during the search for lesions. Interacts with UvrC in an incision complex.

Its subcellular location is the cytoplasm. In terms of biological role, the UvrABC repair system catalyzes the recognition and processing of DNA lesions. A damage recognition complex composed of 2 UvrA and 2 UvrB subunits scans DNA for abnormalities. Upon binding of the UvrA(2)B(2) complex to a putative damaged site, the DNA wraps around one UvrB monomer. DNA wrap is dependent on ATP binding by UvrB and probably causes local melting of the DNA helix, facilitating insertion of UvrB beta-hairpin between the DNA strands. Then UvrB probes one DNA strand for the presence of a lesion. If a lesion is found the UvrA subunits dissociate and the UvrB-DNA preincision complex is formed. This complex is subsequently bound by UvrC and the second UvrB is released. If no lesion is found, the DNA wraps around the other UvrB subunit that will check the other stand for damage. The polypeptide is UvrABC system protein B (Photorhabdus laumondii subsp. laumondii (strain DSM 15139 / CIP 105565 / TT01) (Photorhabdus luminescens subsp. laumondii)).